A 71-amino-acid chain; its full sequence is UPF0346 protein SMU_1621c (71 aa).

Belongs to the UPF0346 family.

The protein is UPF0346 protein SMU_1621c of Streptococcus mutans serotype c (strain ATCC 700610 / UA159).